The primary structure comprises 319 residues: 33 kDa chaperonin (319 aa).

Residues 1–10 show a composition bias toward basic and acidic residues; that stretch reads MTDASGSERL. The disordered stretch occupies residues 1–25; that stretch reads MTDASGSERLKRAKGISEGTPSSLP. Intrachain disulfides connect Cys-261/Cys-263 and Cys-294/Cys-297.

It belongs to the HSP33 family. Under oxidizing conditions two disulfide bonds are formed involving the reactive cysteines. Under reducing conditions zinc is bound to the reactive cysteines and the protein is inactive.

It is found in the cytoplasm. Redox regulated molecular chaperone. Protects both thermally unfolding and oxidatively damaged proteins from irreversible aggregation. Plays an important role in the bacterial defense system toward oxidative stress. The chain is 33 kDa chaperonin from Synechococcus sp. (strain JA-2-3B'a(2-13)) (Cyanobacteria bacterium Yellowstone B-Prime).